A 119-amino-acid polypeptide reads, in one-letter code: Large ribosomal subunit protein uL18 (119 aa).

The segment at 1 to 26 (MGQNDKAARRQKIKLRSKTRGQGTAA) is disordered. Over residues 9–19 (RRQKIKLRSKT) the composition is skewed to basic residues.

This sequence belongs to the universal ribosomal protein uL18 family. As to quaternary structure, part of the 50S ribosomal subunit; part of the 5S rRNA/L5/L18/L25 subcomplex. Contacts the 5S and 23S rRNAs.

In terms of biological role, this is one of the proteins that bind and probably mediate the attachment of the 5S RNA into the large ribosomal subunit, where it forms part of the central protuberance. In Prosthecochloris aestuarii (strain DSM 271 / SK 413), this protein is Large ribosomal subunit protein uL18.